Consider the following 381-residue polypeptide: cAMP-dependent protein kinase type I-beta regulatory subunit (381 aa).

Positions 2 to 136 (ASPPACPSEE…ALAKAISKNV (135 aa)) are dimerization and phosphorylation. Position 3 is a phosphoserine (Ser3). Tyr21 is modified (3'-nitrotyrosine). A disordered region spans residues 67–98 (ARQKSNSQSDSHDEEVSPTPPNPVVKARRRRG). Phosphoserine occurs at positions 77 and 83. Thr85 carries the post-translational modification Phosphothreonine. The Pseudophosphorylation motif motif lies at 96–100 (RRGGV). Arg97 carries the post-translational modification Omega-N-methylarginine. 3',5'-cyclic AMP contacts are provided by residues 137–254 (LFAH…SKVS), Glu202, Arg211, 255–381 (ILES…SLTV), Glu326, and Arg335.

This sequence belongs to the cAMP-dependent kinase regulatory chain family. As to quaternary structure, the inactive holoenzyme is composed of two regulatory chains and two catalytic chains. Activation by cAMP releases the two active catalytic monomers and the regulatory dimer. Interacts with PRKX; regulates this cAMP-dependent protein kinase. Interacts with C2orf88/smAKAP; this interaction may target PRKAR1B to the plasma membrane. The pseudophosphorylation site binds to the substrate-binding region of the catalytic chain, resulting in the inhibition of its activity. As to expression, four types of regulatory chains are found: I-alpha, I-beta, II-alpha, and II-beta. Their expression varies among tissues and is in some cases constitutive and in others inducible.

It localises to the cell membrane. Functionally, regulatory subunit of the cAMP-dependent protein kinases involved in cAMP signaling in cells. The protein is cAMP-dependent protein kinase type I-beta regulatory subunit (PRKAR1B) of Homo sapiens (Human).